We begin with the raw amino-acid sequence, 733 residues long: Phosphoribosylformylglycinamidine synthase subunit PurL (733 aa).

The active site involves His44. The ATP site is built by Tyr47 and Lys86. Glu88 serves as a coordination point for Mg(2+). Substrate contacts are provided by residues Ser89–His92 and Arg111. His90 acts as the Proton acceptor in catalysis. Asp112 is a Mg(2+) binding site. Residue Gln240 participates in substrate binding. Asp268 is a Mg(2+) binding site. Substrate is bound at residue Glu312 to Gln314. Residues Asp496 and Gly533 each contribute to the ATP site. Asn534 is a binding site for Mg(2+). Ser536 lines the substrate pocket.

This sequence belongs to the FGAMS family. In terms of assembly, monomer. Part of the FGAM synthase complex composed of 1 PurL, 1 PurQ and 2 PurS subunits.

The protein resides in the cytoplasm. It catalyses the reaction N(2)-formyl-N(1)-(5-phospho-beta-D-ribosyl)glycinamide + L-glutamine + ATP + H2O = 2-formamido-N(1)-(5-O-phospho-beta-D-ribosyl)acetamidine + L-glutamate + ADP + phosphate + H(+). It participates in purine metabolism; IMP biosynthesis via de novo pathway; 5-amino-1-(5-phospho-D-ribosyl)imidazole from N(2)-formyl-N(1)-(5-phospho-D-ribosyl)glycinamide: step 1/2. Functionally, part of the phosphoribosylformylglycinamidine synthase complex involved in the purines biosynthetic pathway. Catalyzes the ATP-dependent conversion of formylglycinamide ribonucleotide (FGAR) and glutamine to yield formylglycinamidine ribonucleotide (FGAM) and glutamate. The FGAM synthase complex is composed of three subunits. PurQ produces an ammonia molecule by converting glutamine to glutamate. PurL transfers the ammonia molecule to FGAR to form FGAM in an ATP-dependent manner. PurS interacts with PurQ and PurL and is thought to assist in the transfer of the ammonia molecule from PurQ to PurL. This Wolinella succinogenes (strain ATCC 29543 / DSM 1740 / CCUG 13145 / JCM 31913 / LMG 7466 / NCTC 11488 / FDC 602W) (Vibrio succinogenes) protein is Phosphoribosylformylglycinamidine synthase subunit PurL.